We begin with the raw amino-acid sequence, 326 residues long: UDP-N-acetylglucosamine transporter (326 aa).

The next 8 helical transmembrane spans lie at 4–24 (NLKY…VLTM), 38–58 (LSST…IFLV), 136–156 (LGMY…FVQW), 174–194 (FVGL…GVYF), 212–232 (LGFF…GELV), 243–263 (QLTW…AAVI), 269–289 (ILKG…SYFW), and 293–313 (FVPT…TFLY).

It belongs to the nucleotide-sugar transporter family. SLC35A subfamily. Interacts with SLC35A2; the interaction is reduced in the presence of SLC35A4. Found in a complex with SLC35A2 and SLC35A4. Interacts with MGAT4B. In terms of processing, O-Glcnacylation regulates the stability of SLC35A3 and the specific complex formation with MGAT4B.

The protein resides in the golgi apparatus membrane. The catalysed reaction is UMP(out) + UDP-N-acetyl-alpha-D-glucosamine(in) = UMP(in) + UDP-N-acetyl-alpha-D-glucosamine(out). Functionally, transports diphosphate-N-acetylglucosamine (UDP-GlcNAc) from the cytosol into the lumen of the Golgi apparatus, functioning as an antiporter that exchanges UDP-N-acetyl-alpha-D-glucosamine for UMP. May supply UDP-GlcNAc as substrate for Golgi-resident glycosyltransferases that generate highly branched, multiantennary complex N-glycans and keratan sulfate. However, the exact role of SLC35A3 still needs to be elucidated, it could be a member of a catalytically more efficient multiprotein complex rather than function independently as a single transporter. The chain is UDP-N-acetylglucosamine transporter (Slc35a3) from Rattus norvegicus (Rat).